The primary structure comprises 411 residues: DNA polymerase IV (411 aa).

Residues V18 to G211 form the UmuC domain. Mg(2+) is bound by residues D22 and D130. E131 is a catalytic residue. Disordered stretches follow at residues F248–E280 and G376–T411. The span at R253 to S274 shows a compositional bias: basic and acidic residues. Over residues D384–G402 the composition is skewed to gly residues.

The protein belongs to the DNA polymerase type-Y family. As to quaternary structure, monomer. Mg(2+) serves as cofactor.

The protein resides in the cytoplasm. It catalyses the reaction DNA(n) + a 2'-deoxyribonucleoside 5'-triphosphate = DNA(n+1) + diphosphate. Its function is as follows. Poorly processive, error-prone DNA polymerase involved in untargeted mutagenesis. Copies undamaged DNA at stalled replication forks, which arise in vivo from mismatched or misaligned primer ends. These misaligned primers can be extended by PolIV. Exhibits no 3'-5' exonuclease (proofreading) activity. May be involved in translesional synthesis. In Halobacterium salinarum (strain ATCC 29341 / DSM 671 / R1), this protein is DNA polymerase IV.